The sequence spans 394 residues: Ornithine aminotransferase 1 (394 aa).

K252 carries the N6-(pyridoxal phosphate)lysine modification.

Belongs to the class-III pyridoxal-phosphate-dependent aminotransferase family. OAT subfamily. Pyridoxal 5'-phosphate is required as a cofactor.

Its subcellular location is the cytoplasm. The enzyme catalyses a 2-oxocarboxylate + L-ornithine = L-glutamate 5-semialdehyde + an L-alpha-amino acid. It participates in amino-acid biosynthesis; L-proline biosynthesis; L-glutamate 5-semialdehyde from L-ornithine: step 1/1. In terms of biological role, catalyzes the interconversion of ornithine to glutamate semialdehyde. This Staphylococcus saprophyticus subsp. saprophyticus (strain ATCC 15305 / DSM 20229 / NCIMB 8711 / NCTC 7292 / S-41) protein is Ornithine aminotransferase 1.